We begin with the raw amino-acid sequence, 282 residues long: Bis(5'-nucleosyl)-tetraphosphatase, symmetrical (282 aa).

This sequence belongs to the Ap4A hydrolase family.

It carries out the reaction P(1),P(4)-bis(5'-adenosyl) tetraphosphate + H2O = 2 ADP + 2 H(+). Hydrolyzes diadenosine 5',5'''-P1,P4-tetraphosphate to yield ADP. The polypeptide is Bis(5'-nucleosyl)-tetraphosphatase, symmetrical (Escherichia coli O7:K1 (strain IAI39 / ExPEC)).